A 250-amino-acid polypeptide reads, in one-letter code: Leucyl/phenylalanyl-tRNA--protein transferase (250 aa).

Residues 1–21 form a disordered region; it reads MTPFRRPTVLGTSASAPFPPA.

This sequence belongs to the L/F-transferase family.

The protein localises to the cytoplasm. The catalysed reaction is N-terminal L-lysyl-[protein] + L-leucyl-tRNA(Leu) = N-terminal L-leucyl-L-lysyl-[protein] + tRNA(Leu) + H(+). It catalyses the reaction N-terminal L-arginyl-[protein] + L-leucyl-tRNA(Leu) = N-terminal L-leucyl-L-arginyl-[protein] + tRNA(Leu) + H(+). It carries out the reaction L-phenylalanyl-tRNA(Phe) + an N-terminal L-alpha-aminoacyl-[protein] = an N-terminal L-phenylalanyl-L-alpha-aminoacyl-[protein] + tRNA(Phe). Functions in the N-end rule pathway of protein degradation where it conjugates Leu, Phe and, less efficiently, Met from aminoacyl-tRNAs to the N-termini of proteins containing an N-terminal arginine or lysine. This Xanthomonas euvesicatoria pv. vesicatoria (strain 85-10) (Xanthomonas campestris pv. vesicatoria) protein is Leucyl/phenylalanyl-tRNA--protein transferase.